The following is a 306-amino-acid chain: tRNA dimethylallyltransferase 2 (306 aa).

11-18 is an ATP binding site; it reads GPTASGKT. 13–18 lines the substrate pocket; sequence TASGKT. The interval 36-39 is interaction with substrate tRNA; the sequence is DSRQ.

It belongs to the IPP transferase family. As to quaternary structure, monomer. The cofactor is Mg(2+).

The catalysed reaction is adenosine(37) in tRNA + dimethylallyl diphosphate = N(6)-dimethylallyladenosine(37) in tRNA + diphosphate. In terms of biological role, catalyzes the transfer of a dimethylallyl group onto the adenine at position 37 in tRNAs that read codons beginning with uridine, leading to the formation of N6-(dimethylallyl)adenosine (i(6)A). This Bacteroides fragilis (strain ATCC 25285 / DSM 2151 / CCUG 4856 / JCM 11019 / LMG 10263 / NCTC 9343 / Onslow / VPI 2553 / EN-2) protein is tRNA dimethylallyltransferase 2.